Consider the following 246-residue polypeptide: Glucosamine-6-phosphate deaminase (246 aa).

The active-site Proton acceptor; for enolization step is the aspartate 67. The active-site For ring-opening step is the asparagine 136. The active-site Proton acceptor; for ring-opening step is histidine 138. Catalysis depends on glutamate 143, which acts as the For ring-opening step.

The protein belongs to the glucosamine/galactosamine-6-phosphate isomerase family. NagB subfamily.

It catalyses the reaction alpha-D-glucosamine 6-phosphate + H2O = beta-D-fructose 6-phosphate + NH4(+). The protein operates within amino-sugar metabolism; N-acetylneuraminate degradation; D-fructose 6-phosphate from N-acetylneuraminate: step 5/5. Functionally, catalyzes the reversible isomerization-deamination of glucosamine 6-phosphate (GlcN6P) to form fructose 6-phosphate (Fru6P) and ammonium ion. This chain is Glucosamine-6-phosphate deaminase, found in Halalkalibacterium halodurans (strain ATCC BAA-125 / DSM 18197 / FERM 7344 / JCM 9153 / C-125) (Bacillus halodurans).